Reading from the N-terminus, the 649-residue chain is Echinoderm microtubule-associated protein-like 2 (649 aa).

Positions 10–649 (KEVIFSVEDG…DTSVLQWRVV (640 aa)) are tandem atypical propeller in EMLs. Coiled-coil stretches lie at residues 13-58 (IFSV…LKLE) and 73-114 (YLLP…LAIH). 12 WD repeats span residues 56–93 (KLEW…LYSV), 97–144 (RQRH…IWDS), 151–192 (HVLG…VWDW), 195–234 (ETKV…FWTL), 241–280 (KRQG…VWGK), 285–323 (ITQA…LWGS), 369–406 (FSLL…LWSS), 410–447 (QPLW…LLDT), 452–489 (LVAI…VYTV), 495–535 (KVSR…YWDP), 564–602 (FGIW…LFSY), and 609–648 (ALSH…QWRV).

It belongs to the WD repeat EMAP family. Homotrimer; self-association is mediated by the N-terminal coiled coil. In terms of assembly, interacts with GRID2 and may also interact with GRID1. Interacts with EML3. Binds unpolymerized tubulins via its WD repeat region. In terms of tissue distribution, ubiquitous.

It localises to the cytoplasm. The protein resides in the cytoskeleton. It is found in the spindle. Tubulin binding protein that inhibits microtubule nucleation and growth, resulting in shorter microtubules. In Homo sapiens (Human), this protein is Echinoderm microtubule-associated protein-like 2 (EML2).